The primary structure comprises 249 residues: DNA repair protein RecO (249 aa).

Belongs to the RecO family.

Involved in DNA repair and RecF pathway recombination. This chain is DNA repair protein RecO, found in Sinorhizobium medicae (strain WSM419) (Ensifer medicae).